The sequence spans 421 residues: Periplasmic [Fe] hydrogenase large subunit (421 aa).

4Fe-4S ferredoxin-type domains lie at 26-57 (HFVQ…MGEP) and 59-86 (SIPH…EAQS). Residues C35, C38, C41, C45, C66, C69, C72, C76, C179, C234, C378, and C382 each coordinate [4Fe-4S] cluster. C382 is a Fe(2+) binding site.

Heterodimer of a large and a small subunit. It depends on [4Fe-4S] cluster as a cofactor. Requires Fe(2+) as cofactor.

The protein resides in the periplasm. The enzyme catalyses H2 + 2 oxidized [2Fe-2S]-[ferredoxin] = 2 reduced [2Fe-2S]-[ferredoxin] + 2 H(+). In terms of biological role, may be involved in hydrogen uptake for the reduction of sulfate to hydrogen sulfide in an electron transport chain. Cytochrome c3 is likely to be the physiological electron carrier for the enzyme. The protein is Periplasmic [Fe] hydrogenase large subunit (hydA) of Nitratidesulfovibrio vulgaris (strain ATCC 29579 / DSM 644 / CCUG 34227 / NCIMB 8303 / VKM B-1760 / Hildenborough) (Desulfovibrio vulgaris).